The sequence spans 599 residues: Elongation factor 4 (599 aa).

A tr-type G domain is found at 2–184 (KNIRNFSIIA…RLVRDIPPPE (183 aa)). Residues 14–19 (DHGKST) and 131–134 (NKID) each bind GTP.

This sequence belongs to the TRAFAC class translation factor GTPase superfamily. Classic translation factor GTPase family. LepA subfamily.

It is found in the cell inner membrane. The enzyme catalyses GTP + H2O = GDP + phosphate + H(+). Functionally, required for accurate and efficient protein synthesis under certain stress conditions. May act as a fidelity factor of the translation reaction, by catalyzing a one-codon backward translocation of tRNAs on improperly translocated ribosomes. Back-translocation proceeds from a post-translocation (POST) complex to a pre-translocation (PRE) complex, thus giving elongation factor G a second chance to translocate the tRNAs correctly. Binds to ribosomes in a GTP-dependent manner. The chain is Elongation factor 4 from Escherichia coli (strain UTI89 / UPEC).